We begin with the raw amino-acid sequence, 79 residues long: U24-theraphotoxin-Cg1a (79 aa).

The N-terminal stretch at 1–19 is a signal peptide; the sequence is MRVLFIIAVLALISVGCYA. A propeptide spanning residues 20-44 is cleaved from the precursor; the sequence is SEMKDRSSRNEVLSAIFAIEEPQER. Disulfide bonds link Cys-46–Cys-61, Cys-53–Cys-66, and Cys-60–Cys-73. Position 78 is a tryptophan amide (Trp-78).

The protein belongs to the neurotoxin 10 (Hwtx-1) family. 35 (Jztx-27) subfamily. In terms of tissue distribution, expressed by the venom gland.

The protein localises to the secreted. Its function is as follows. Probable ion channel inhibitor. In Chilobrachys guangxiensis (Chinese earth tiger tarantula), this protein is U24-theraphotoxin-Cg1a.